A 219-amino-acid chain; its full sequence is Thiopurine S-methyltransferase (219 aa).

W10, L45, E66, and R123 together coordinate S-adenosyl-L-methionine.

Belongs to the class I-like SAM-binding methyltransferase superfamily. TPMT family.

The protein resides in the cytoplasm. It carries out the reaction S-adenosyl-L-methionine + a thiopurine = S-adenosyl-L-homocysteine + a thiopurine S-methylether.. In Bordetella petrii (strain ATCC BAA-461 / DSM 12804 / CCUG 43448), this protein is Thiopurine S-methyltransferase.